A 141-amino-acid chain; its full sequence is Large ribosomal subunit protein uL11 (141 aa).

Belongs to the universal ribosomal protein uL11 family. Part of the ribosomal stalk of the 50S ribosomal subunit. Interacts with L10 and the large rRNA to form the base of the stalk. L10 forms an elongated spine to which L12 dimers bind in a sequential fashion forming a multimeric L10(L12)X complex. In terms of processing, one or more lysine residues are methylated.

In terms of biological role, forms part of the ribosomal stalk which helps the ribosome interact with GTP-bound translation factors. The chain is Large ribosomal subunit protein uL11 from Chlamydia trachomatis serovar L2 (strain ATCC VR-902B / DSM 19102 / 434/Bu).